A 158-amino-acid polypeptide reads, in one-letter code: NAD(P)H-quinone oxidoreductase subunit J, chloroplastic (158 aa).

It belongs to the complex I 30 kDa subunit family. As to quaternary structure, NDH is composed of at least 16 different subunits, 5 of which are encoded in the nucleus.

The protein resides in the plastid. It is found in the chloroplast thylakoid membrane. The enzyme catalyses a plastoquinone + NADH + (n+1) H(+)(in) = a plastoquinol + NAD(+) + n H(+)(out). The catalysed reaction is a plastoquinone + NADPH + (n+1) H(+)(in) = a plastoquinol + NADP(+) + n H(+)(out). Functionally, NDH shuttles electrons from NAD(P)H:plastoquinone, via FMN and iron-sulfur (Fe-S) centers, to quinones in the photosynthetic chain and possibly in a chloroplast respiratory chain. The immediate electron acceptor for the enzyme in this species is believed to be plastoquinone. Couples the redox reaction to proton translocation, and thus conserves the redox energy in a proton gradient. In Piper cenocladum (Ant piper), this protein is NAD(P)H-quinone oxidoreductase subunit J, chloroplastic.